Consider the following 85-residue polypeptide: Putative N.vectensis toxin 1 9 (85 aa).

The N-terminal stretch at 1–20 is a signal peptide; that stretch reads MASFKIVIVCLALLVAVASA. A propeptide spanning residues 21 to 36 is cleaved from the precursor; the sequence is RRRDMMSDDELDYHFS. Intrachain disulfides connect cysteine 42–cysteine 82, cysteine 44–cysteine 72, and cysteine 65–cysteine 83.

This sequence belongs to the sea anemone sodium channel inhibitory toxin family. Type II subfamily. Expressed in ectodermal glands and in clumps outside of the extodermal layer. Is not expressed in nematocytes. In adult female tissues, shows similar expression levels in mesenteries (gametes-producing tissue), tentacles, pharynx and physa.

It localises to the secreted. Binds to site 3 of voltage-gated sodium channels and inhibits the inactivation process. Is highly active on DmNav1/TipE (drosophila) and is only extremely weakly active on rat Nav1.4-beta-1/SCN4A-SCN1B, and on human Nav1.5-beta-1/SCN5A-beta-1. This reveals high specificity for arthropod over mammalian channels. In vivo, when released into the medium, this recombinant toxin induces impaired swimming, paralysis and death of the crustacean A.nauplii within several hours. Also causes paralysis of cherry shrimps immediately after injection at very low doses. Its effect on zebrafish (D.rerio) larvae is also rapid, since it induces tail twitching accompanied by impaired swimming after 20 minutes and complete paralysis within 45 minutes. It has also been observed to cause death of zebrafish larvae within 1 hour. The sequence is that of Putative N.vectensis toxin 1 9 from Nematostella vectensis (Starlet sea anemone).